The sequence spans 485 residues: Adenosylhomocysteinase (485 aa).

The substrate site is built by threonine 64, aspartate 139, and glutamate 205. 206–208 (TTT) provides a ligand contact to NAD(+). Positions 235 and 239 each coordinate substrate. NAD(+) contacts are provided by residues asparagine 240, 269–274 (GYGDVG), glutamate 292, asparagine 327, 348–350 (IGH), and asparagine 397.

It belongs to the adenosylhomocysteinase family. It depends on NAD(+) as a cofactor.

The enzyme catalyses S-adenosyl-L-homocysteine + H2O = L-homocysteine + adenosine. It participates in amino-acid biosynthesis; L-homocysteine biosynthesis; L-homocysteine from S-adenosyl-L-homocysteine: step 1/1. Adenosylhomocysteine is a competitive inhibitor of S-adenosyl-L-methionine-dependent methyl transferase reactions; therefore adenosylhomocysteinase may play a key role in the control of methylations via regulation of the intracellular concentration of adenosylhomocysteine. The protein is Adenosylhomocysteinase (SAHH) of Phalaenopsis sp. (Moth orchid).